The chain runs to 729 residues: Fatty acid oxidation complex subunit alpha (729 aa).

Residues 1 to 189 (MLYQSETLQL…KIGLVDAVVD (189 aa)) are enoyl-CoA hydratase/isomerase. Asp-296 is a substrate binding site. Residues 311–729 (AAPKLAAVLG…LLDVSTNQPA (419 aa)) are 3-hydroxyacyl-CoA dehydrogenase. Residues Met-324, Asp-343, 400 to 402 (VVE), Lys-407, and Ser-429 each bind NAD(+). The For 3-hydroxyacyl-CoA dehydrogenase activity role is filled by His-450. Residue Asn-453 coordinates NAD(+). 2 residues coordinate substrate: Asn-500 and Tyr-660.

This sequence in the N-terminal section; belongs to the enoyl-CoA hydratase/isomerase family. The protein in the C-terminal section; belongs to the 3-hydroxyacyl-CoA dehydrogenase family. Heterotetramer of two alpha chains (FadB) and two beta chains (FadA).

The enzyme catalyses a (3S)-3-hydroxyacyl-CoA + NAD(+) = a 3-oxoacyl-CoA + NADH + H(+). It catalyses the reaction a (3S)-3-hydroxyacyl-CoA = a (2E)-enoyl-CoA + H2O. The catalysed reaction is a 4-saturated-(3S)-3-hydroxyacyl-CoA = a (3E)-enoyl-CoA + H2O. It carries out the reaction (3S)-3-hydroxybutanoyl-CoA = (3R)-3-hydroxybutanoyl-CoA. The enzyme catalyses a (3Z)-enoyl-CoA = a 4-saturated (2E)-enoyl-CoA. It catalyses the reaction a (3E)-enoyl-CoA = a 4-saturated (2E)-enoyl-CoA. It participates in lipid metabolism; fatty acid beta-oxidation. Functionally, involved in the aerobic and anaerobic degradation of long-chain fatty acids via beta-oxidation cycle. Catalyzes the formation of 3-oxoacyl-CoA from enoyl-CoA via L-3-hydroxyacyl-CoA. It can also use D-3-hydroxyacyl-CoA and cis-3-enoyl-CoA as substrate. This Yersinia pestis bv. Antiqua (strain Antiqua) protein is Fatty acid oxidation complex subunit alpha.